Here is a 130-residue protein sequence, read N- to C-terminus: Small ribosomal subunit protein uS11 (130 aa).

It belongs to the universal ribosomal protein uS11 family. As to quaternary structure, part of the 30S ribosomal subunit. Interacts with proteins S7 and S18. Binds to IF-3.

Located on the platform of the 30S subunit, it bridges several disparate RNA helices of the 16S rRNA. Forms part of the Shine-Dalgarno cleft in the 70S ribosome. This Acholeplasma laidlawii (strain PG-8A) protein is Small ribosomal subunit protein uS11.